The primary structure comprises 93 residues: Cell division topological specificity factor (93 aa).

This sequence belongs to the MinE family.

Prevents the cell division inhibition by proteins MinC and MinD at internal division sites while permitting inhibition at polar sites. This ensures cell division at the proper site by restricting the formation of a division septum at the midpoint of the long axis of the cell. The protein is Cell division topological specificity factor of Alkaliphilus oremlandii (strain OhILAs) (Clostridium oremlandii (strain OhILAs)).